Here is a 159-residue protein sequence, read N- to C-terminus: Ribosomal RNA large subunit methyltransferase H (159 aa).

Residues glycine 108 and 127-132 contribute to the S-adenosyl-L-methionine site; that span reads FGKLTM.

Belongs to the RNA methyltransferase RlmH family. In terms of assembly, homodimer.

It is found in the cytoplasm. It catalyses the reaction pseudouridine(1915) in 23S rRNA + S-adenosyl-L-methionine = N(3)-methylpseudouridine(1915) in 23S rRNA + S-adenosyl-L-homocysteine + H(+). Specifically methylates the pseudouridine at position 1915 (m3Psi1915) in 23S rRNA. The polypeptide is Ribosomal RNA large subunit methyltransferase H (Lactobacillus helveticus (strain DPC 4571)).